Here is a 31-residue protein sequence, read N- to C-terminus: Cytochrome b6-f complex subunit 6 (31 aa).

A helical transmembrane segment spans residues 4 to 24 (IISYFLFLIGALTLALVLFIG).

The protein belongs to the PetL family. The 4 large subunits of the cytochrome b6-f complex are cytochrome b6, subunit IV (17 kDa polypeptide, PetD), cytochrome f and the Rieske protein, while the 4 small subunits are PetG, PetL, PetM and PetN. The complex functions as a dimer.

The protein resides in the plastid. It is found in the chloroplast thylakoid membrane. In terms of biological role, component of the cytochrome b6-f complex, which mediates electron transfer between photosystem II (PSII) and photosystem I (PSI), cyclic electron flow around PSI, and state transitions. PetL is important for photoautotrophic growth as well as for electron transfer efficiency and stability of the cytochrome b6-f complex. The polypeptide is Cytochrome b6-f complex subunit 6 (Marchantia polymorpha (Common liverwort)).